Reading from the N-terminus, the 528-residue chain is Glutamyl-tRNA(Gln) amidotransferase subunit B, mitochondrial (528 aa).

A mitochondrion-targeting transit peptide spans 1-21 (MSWRLSFRTNLLIYNVRRRNY).

Belongs to the GatB/GatE family. GatB subfamily. As to quaternary structure, subunit of the heterotrimeric GatCAB amidotransferase (AdT) complex, composed of A, B and C subunits.

It localises to the mitochondrion. The enzyme catalyses L-glutamyl-tRNA(Gln) + L-glutamine + ATP + H2O = L-glutaminyl-tRNA(Gln) + L-glutamate + ADP + phosphate + H(+). Allows the formation of correctly charged Gln-tRNA(Gln) through the transamidation of misacylated Glu-tRNA(Gln) in the mitochondria. The reaction takes place in the presence of glutamine and ATP through an activated gamma-phospho-Glu-tRNA(Gln). The chain is Glutamyl-tRNA(Gln) amidotransferase subunit B, mitochondrial from Aedes aegypti (Yellowfever mosquito).